A 273-amino-acid polypeptide reads, in one-letter code: Ribosomal RNA small subunit methyltransferase A (273 aa).

Positions 18, 20, 45, 66, 91, and 113 each coordinate S-adenosyl-L-methionine.

The protein belongs to the class I-like SAM-binding methyltransferase superfamily. rRNA adenine N(6)-methyltransferase family. RsmA subfamily.

The protein resides in the cytoplasm. The catalysed reaction is adenosine(1518)/adenosine(1519) in 16S rRNA + 4 S-adenosyl-L-methionine = N(6)-dimethyladenosine(1518)/N(6)-dimethyladenosine(1519) in 16S rRNA + 4 S-adenosyl-L-homocysteine + 4 H(+). Functionally, specifically dimethylates two adjacent adenosines (A1518 and A1519) in the loop of a conserved hairpin near the 3'-end of 16S rRNA in the 30S particle. May play a critical role in biogenesis of 30S subunits. The sequence is that of Ribosomal RNA small subunit methyltransferase A from Escherichia coli O17:K52:H18 (strain UMN026 / ExPEC).